The sequence spans 496 residues: Polyamine oxidase 6 (496 aa).

The signal sequence occupies residues 1–27 (MTKPTTMAIFLVLALSIAQLLPSLVAG). The FAD site is built by Glu-61 and Arg-69. 2 N-linked (GlcNAc...) asparagine glycosylation sites follow: Asn-103 and Asn-150. Residue Val-261 participates in FAD binding. Asn-278 carries N-linked (GlcNAc...) asparagine glycosylation. Residue Glu-454 coordinates FAD.

This sequence belongs to the flavin monoamine oxidase family. FAD serves as cofactor.

Its subcellular location is the secreted. It is found in the extracellular space. The protein localises to the apoplast. It participates in amine and polyamine degradation; spermine degradation. Its function is as follows. Flavoenzyme involved in polyamine back-conversion. Catalyzes the oxidation of the secondary amino group of polyamines, such as spermine and spermidine. The chain is Polyamine oxidase 6 from Oryza sativa subsp. japonica (Rice).